The sequence spans 4010 residues: Extracellular matrix organizing protein FRAS1 (4010 aa).

The signal sequence occupies residues 1-25 (MGVLKAWLGVALALAEFAVLPNCEG). VWFC domains lie at 26–87 (ACLY…PQCA), 92–152 (GSCH…PICV), 156–216 (KPCS…SQCS), 218–278 (RSCS…EECA), and 282–342 (RSCS…PECI). Over 26-3903 (ACLYQGSFLA…AASLSQTGAS (3878 aa)) the chain is Extracellular. A Phosphoserine modification is found at serine 343. One can recognise a VWFC 6 domain in the interval 358–416 (SSSAREIKHVPDGEKWEEGPCKLCECREAQVTCYEPSCPPCPVATLALVVKGQCCPDCT). FU repeat units lie at residues 408–459 (KGQC…GFYQ), 461–504 (GSLC…GFYQ), 506–552 (HHSC…GFYN), 554–598 (QGTC…GYYA), 601–646 (TGSC…GFYP), 648–704 (HGIC…HFYL), 707–752 (TGLC…THFN), 754–799 (EGTC…EQFL), 802–851 (VGYC…GHYK), 853–899 (RGTC…GHYL), 902–947 (NQVC…QYYL), 951–996 (TKTC…QHYR), 998–1041 (SGSC…GYFA), and 1045–1088 (KHRC…GFSG). Asparagine 727 carries N-linked (GlcNAc...) asparagine glycosylation. Residues asparagine 1094 and asparagine 1107 are each glycosylated (N-linked (GlcNAc...) asparagine). CSPG repeat units follow at residues 1101-1196 (TPSL…LKIS), 1216-1307 (APYV…FQAN), 1328-1440 (ALRL…FQVS), 1465-1561 (APKL…FSFA), 1597-1691 (PAFQ…ISVT), 1712-1812 (GPRL…FSVS), and 1834-1938 (PPHI…FYVS). Residue asparagine 1506 is glycosylated (N-linked (GlcNAc...) asparagine). Asparagine 1779 carries N-linked (GlcNAc...) asparagine glycosylation. N-linked (GlcNAc...) asparagine glycosylation is found at asparagine 1950 and asparagine 1980. CSPG repeat units follow at residues 1959–2059 (EPPR…FSLT), 2080–2179 (IPHL…FDVV), 2201–2293 (PPVV…FVLS), 2313–2406 (ARPL…FTVS), and 2441–2538 (TPRI…FLVK). Calx-beta domains are found at residues 2545–2648 (VSDN…VGLS), 2661–2772 (AKVV…IALA), 2786–2892 (AKVL…VFLS), 2907–3009 (IAIN…VYLG), and 3027–3131 (ATVT…LVLG). N-linked (GlcNAc...) asparagine glycosylation is found at asparagine 2565, asparagine 2666, and asparagine 2684. 6 N-linked (GlcNAc...) asparagine glycosylation sites follow: asparagine 2910, asparagine 2987, asparagine 3072, asparagine 3220, asparagine 3678, and asparagine 3877. The chain crosses the membrane as a helical span at residues 3904–3924 (IGSALAAIMLLLLLFLVACFV). Residues 3925-4010 (TRKCQKQKKK…HNNLQDGTEV (86 aa)) lie on the Cytoplasmic side of the membrane.

Belongs to the FRAS1 family.

The protein localises to the cell membrane. Its function is as follows. Involved in extracellular matrix organization. Required for the regulation of epidermal-basement membrane adhesion responsible for proper organogenesis during embryonic development. Involved in brain organization and function. In Mus musculus (Mouse), this protein is Extracellular matrix organizing protein FRAS1.